A 353-amino-acid polypeptide reads, in one-letter code: Uroporphyrinogen decarboxylase (353 aa).

Substrate contacts are provided by residues 29–33 (RQAGR), Asp79, Tyr156, Thr211, and His329.

It belongs to the uroporphyrinogen decarboxylase family. Homodimer.

The protein resides in the cytoplasm. It carries out the reaction uroporphyrinogen III + 4 H(+) = coproporphyrinogen III + 4 CO2. The protein operates within porphyrin-containing compound metabolism; protoporphyrin-IX biosynthesis; coproporphyrinogen-III from 5-aminolevulinate: step 4/4. Catalyzes the decarboxylation of four acetate groups of uroporphyrinogen-III to yield coproporphyrinogen-III. The protein is Uroporphyrinogen decarboxylase of Alcanivorax borkumensis (strain ATCC 700651 / DSM 11573 / NCIMB 13689 / SK2).